Consider the following 154-residue polypeptide: MHPAHLLVPLGVCVSLLGAARIPPLPLSLVEFRILIKCANHNSRNVLDYADYGCYCGKGGSGTPVDELDRCCQAHDYCYDDAEKLPACNYRFSGPYWNPYSYKCNEGEVTCTDDNDECKAFICNCDRTAAICFAGAPYNDENFMITIKKKNICQ.

The first 19 residues, 1 to 19 (MHPAHLLVPLGVCVSLLGA), serve as a signal peptide directing secretion. Positions 20–27 (ARIPPLPL) are excised as a propeptide. Disulfide bonds link Cys-38/Cys-104, Cys-54/Cys-153, Cys-56/Cys-72, Cys-71/Cys-132, Cys-78/Cys-125, Cys-88/Cys-118, and Cys-111/Cys-123. Tyr-55, Gly-57, and Gly-59 together coordinate Ca(2+). Residue His-75 is part of the active site. Asp-76 provides a ligand contact to Ca(2+). Residue Asp-126 is part of the active site.

It belongs to the phospholipase A2 family. Group I subfamily. D49 sub-subfamily. In terms of assembly, monomer. The cofactor is Ca(2+). In terms of tissue distribution, expressed by the venom gland.

The protein resides in the secreted. The catalysed reaction is a 1,2-diacyl-sn-glycero-3-phosphocholine + H2O = a 1-acyl-sn-glycero-3-phosphocholine + a fatty acid + H(+). In terms of biological role, snake venom phospholipase A2 (PLA2) that shows moderate enzymatic activity and exhibits procoagulant activity. PLA2 catalyzes the calcium-dependent hydrolysis of the 2-acyl groups in 3-sn-phosphoglycerides. This chain is Acidic phospholipase A2 2, found in Pseudonaja textilis (Eastern brown snake).